Here is a 372-residue protein sequence, read N- to C-terminus: Alanine dehydrogenase 1 (372 aa).

His-94 is a catalytic residue. 170–200 is an NAD(+) binding site; it reads TYVIFGGGVAATNAANVALGLNAKVIIIELN.

Belongs to the AlaDH/PNT family.

The enzyme catalyses L-alanine + NAD(+) + H2O = pyruvate + NH4(+) + NADH + H(+). Its pathway is amino-acid degradation; L-alanine degradation via dehydrogenase pathway; NH(3) and pyruvate from L-alanine: step 1/1. May play a role in cell wall synthesis as L-alanine is an important constituent of the peptidoglycan layer. This Staphylococcus aureus (strain bovine RF122 / ET3-1) protein is Alanine dehydrogenase 1 (ald1).